The following is a 224-amino-acid chain: Uridylate kinase (224 aa).

Position 9–10 (G9–S10) interacts with ATP. G43 is a UMP binding site. ATP-binding residues include G44 and R48. UMP contacts are provided by residues D65 and T113–T119. Residues T139, Y145, and D148 each contribute to the ATP site.

Belongs to the UMP kinase family. In terms of assembly, homohexamer.

Its subcellular location is the cytoplasm. It carries out the reaction UMP + ATP = UDP + ADP. Its pathway is pyrimidine metabolism; CTP biosynthesis via de novo pathway; UDP from UMP (UMPK route): step 1/1. With respect to regulation, inhibited by UTP. In terms of biological role, catalyzes the reversible phosphorylation of UMP to UDP. This is Uridylate kinase from Methanothermobacter thermautotrophicus (strain ATCC 29096 / DSM 1053 / JCM 10044 / NBRC 100330 / Delta H) (Methanobacterium thermoautotrophicum).